A 181-amino-acid chain; its full sequence is 3-hydroxyacyl-[acyl-carrier-protein] dehydratase FabZ (181 aa).

Residue histidine 54 is part of the active site.

This sequence belongs to the thioester dehydratase family. FabZ subfamily.

The protein localises to the cytoplasm. It catalyses the reaction a (3R)-hydroxyacyl-[ACP] = a (2E)-enoyl-[ACP] + H2O. Its function is as follows. Involved in unsaturated fatty acids biosynthesis. Catalyzes the dehydration of short chain beta-hydroxyacyl-ACPs and long chain saturated and unsaturated beta-hydroxyacyl-ACPs. This chain is 3-hydroxyacyl-[acyl-carrier-protein] dehydratase FabZ, found in Yersinia pestis.